The chain runs to 894 residues: Transcriptional activator/repressor GIS1 (894 aa).

In terms of domain architecture, JmjN spans 12-53 (VPVFKPSMMEFANFQYFIDEITKFGIENGIVKVIPPKEWLEL). Serine 70 is subject to Phosphoserine. The stretch at 90–110 (ENEYDNKSYNLTQWKNLAESL) forms a coiled coil. The JmjC domain occupies 170–324 (PYDLTLWNLN…VRKQPLKCGC (155 aa)). The Bipartite nuclear localization signal signature appears at 316-332 (RKQPLKCGCGNKKEERK). A disordered region spans residues 324–355 (CGNKKEERKSGPFSNLSYDSNESEQRGSITDN). The segment covering 335 to 354 (PFSNLSYDSNESEQRGSITD) has biased composition (polar residues). At serine 343 the chain carries Phosphoserine. Residues 361–385 (QKVRSFDELLNHSSQELQNLEDNKN) adopt a coiled-coil conformation. Over residues 521-554 (NISSTNNSANNSSSNNNVSTVPSSMMHSSTLNGT) the composition is skewed to low complexity. The disordered stretch occupies residues 521–558 (NISSTNNSANNSSSNNNVSTVPSSMMHSSTLNGTSGLG). 5 positions are modified to phosphoserine: serine 690, serine 694, serine 696, serine 734, and serine 747. Positions 756-768 (LNGNDNSNLDSNN) are enriched in low complexity. Positions 756 to 810 (LNGNDNSNLDSNNFDYSFTGNKQESNPSILNNNTNNNDNYRTSSMNNNGNNYQAH) are disordered. Composition is skewed to polar residues over residues 769 to 785 (FDYS…PSIL) and 795 to 810 (YRTS…YQAH). The C2H2-type 1 zinc finger occupies 828–851 (YICRECNRQFSSGHHLTRHKKSVH). A C2H2-type 2; atypical zinc finger spans residues 857–882 (HSCPRCGKRFKRRDHVLQHLNKKIPC).

It localises to the nucleus. Transcription factor involved in the regulation of gene expression upon nutrient starvation. Recognizes and binds to the post-diauxic-shift element 5'-T[AT]AGGGAT-3' in the promoter region. Can act as a transcriptional activator (e.g. of stress genes like SSA3, HSP12 and HSP26) as well as a repressor (e.g. of pyrophosphate phosphatase DPP1). GIS1 also acts as a DNA damage-responsive transcriptional repressor of photolyase PHR1. The protein is Transcriptional activator/repressor GIS1 (GIS1) of Saccharomyces cerevisiae (strain ATCC 204508 / S288c) (Baker's yeast).